The primary structure comprises 537 residues: NEDD4-binding protein 3 (537 aa).

At S172 the chain carries Phosphoserine. 3 disordered regions span residues 173–234, 328–361, and 423–458; these read LDEG…VLSC, KELR…EARW, and QEQA…REGA. The segment covering 178–207 has biased composition (low complexity); the sequence is PEPSLSDSSSGGSFGRSPGTGPSPFSSSLG. Residues 295 to 501 are a coiled coil; sequence VERLHEVAQK…RVLRYQREIQ (207 aa). Basic and acidic residues predominate over residues 351-361; it reads PNARPEEEARW.

This sequence belongs to the N4BP3 family. As to quaternary structure, binds NEDD4. Interacts with 14-3-3 proteins. Interacts with MAVS.

It is found in the cytoplasmic vesicle. Its subcellular location is the cell projection. It localises to the axon. The protein localises to the dendrite. Its function is as follows. Plays a positive role in the antiviral innate immune signaling pathway. Mechanistically, interacts with MAVS and functions as a positive regulator to promote 'Lys-63'-linked polyubiquitination of MAVS and thus strengthens the interaction between MAVS and TRAF2. Also plays a role in axon and dendrite arborization during cranial nerve development. May also be important for neural crest migration and early development of other anterior structures including eye, brain and cranial cartilage. The sequence is that of NEDD4-binding protein 3 (N4bp3) from Mus musculus (Mouse).